The sequence spans 170 residues: NADH-quinone oxidoreductase subunit B (170 aa).

[4Fe-4S] cluster contacts are provided by C37, C38, C102, and C131.

It belongs to the complex I 20 kDa subunit family. As to quaternary structure, NDH-1 is composed of 14 different subunits. Subunits NuoB, C, D, E, F, and G constitute the peripheral sector of the complex. The cofactor is [4Fe-4S] cluster.

The protein resides in the cell inner membrane. It catalyses the reaction a quinone + NADH + 5 H(+)(in) = a quinol + NAD(+) + 4 H(+)(out). Functionally, NDH-1 shuttles electrons from NADH, via FMN and iron-sulfur (Fe-S) centers, to quinones in the respiratory chain. The immediate electron acceptor for the enzyme in this species is believed to be ubiquinone. Couples the redox reaction to proton translocation (for every two electrons transferred, four hydrogen ions are translocated across the cytoplasmic membrane), and thus conserves the redox energy in a proton gradient. The chain is NADH-quinone oxidoreductase subunit B from Geotalea uraniireducens (strain Rf4) (Geobacter uraniireducens).